Here is a 286-residue protein sequence, read N- to C-terminus: Bifunctional protein FolD (286 aa).

166–168 (GAS) contacts NADP(+).

This sequence belongs to the tetrahydrofolate dehydrogenase/cyclohydrolase family. In terms of assembly, homodimer.

It carries out the reaction (6R)-5,10-methylene-5,6,7,8-tetrahydrofolate + NADP(+) = (6R)-5,10-methenyltetrahydrofolate + NADPH. The catalysed reaction is (6R)-5,10-methenyltetrahydrofolate + H2O = (6R)-10-formyltetrahydrofolate + H(+). It functions in the pathway one-carbon metabolism; tetrahydrofolate interconversion. In terms of biological role, catalyzes the oxidation of 5,10-methylenetetrahydrofolate to 5,10-methenyltetrahydrofolate and then the hydrolysis of 5,10-methenyltetrahydrofolate to 10-formyltetrahydrofolate. This is Bifunctional protein FolD from Idiomarina loihiensis (strain ATCC BAA-735 / DSM 15497 / L2-TR).